A 343-amino-acid polypeptide reads, in one-letter code: L-threonine 3-dehydrogenase (343 aa).

Zn(2+) is bound at residue C40. Active-site charge relay system residues include T42 and H45. The Zn(2+) site is built by H65, E66, C95, C98, C101, and C109. Residues I177, D197, R202, 264–266 (LGI), and 288–289 (IY) each bind NAD(+).

It belongs to the zinc-containing alcohol dehydrogenase family. In terms of assembly, homotetramer. Requires Zn(2+) as cofactor.

It is found in the cytoplasm. The catalysed reaction is L-threonine + NAD(+) = (2S)-2-amino-3-oxobutanoate + NADH + H(+). It participates in amino-acid degradation; L-threonine degradation via oxydo-reductase pathway; glycine from L-threonine: step 1/2. In terms of biological role, catalyzes the NAD(+)-dependent oxidation of L-threonine to 2-amino-3-ketobutyrate. The chain is L-threonine 3-dehydrogenase from Vibrio vulnificus (strain YJ016).